The primary structure comprises 648 residues: MNARVEQLEFQAEARQLLDLMIHSVYSNKDSFLRELISNASDALDKLRIEAFRNKDLEVDTSDLHIETEADKGARTLTVRDNGIGMTRAEVVDLIGTLAKSGTAELRAQLREAKNDAASEELIGQFGIGFYSSFMVADKVELLTRKAGESEATKWESSGEGTYTIESVEGAPQGTSVTLHLKPEDAEDELYDYTADWKLRHLIKKYSDFIAWPIRMEVEKRVPAPHEEGEEPGEETVVLETETLNSMKALWARPKDEVSADEYNEFYKHIAHAWDDPMEVIAMKAEGTFEYQALLFIPSHAQHDLFNRDAVFGIQLYVKRVFIMGDCDQLMPEYLRFVKGVVDAQDMSLNVSREILQQDRQIKAIRRRLTKKVLSTIKDLQSERPEDYRTFWTQFGKVVKEGLLADFDNRETLLEISSFASTHSEEEPTTLAGYVERMKEDQTQIFFATGDSRQQILKSPHLEAFRAKGYEVLLLTEPVDEVWVGVVNEFDGKPLQSVAKGEVDLDSDGEGSEAEREEQQKEFADLLGWLKETLGEQVKEVRLSTRLTESPACLITDTFGITPALARIYRATGQDVPVGKRTLELNPTHPLVIGLRQAQASADDDAKKEAVSETAELLYGTALLAEGGAPDDPARFAELLADRLTRTL.

Residues 1 to 353 (MNARVEQLEF…AQDMSLNVSR (353 aa)) form an a; substrate-binding region. Positions 354-567 (EILQQDRQIK…TFGITPALAR (214 aa)) are b. The tract at residues 568–648 (IYRATGQDVP…LLADRLTRTL (81 aa)) is c.

The protein belongs to the heat shock protein 90 family. In terms of assembly, homodimer.

It is found in the cytoplasm. Functionally, molecular chaperone. Has ATPase activity. This is Chaperone protein HtpG from Mycobacterium ulcerans (strain Agy99).